We begin with the raw amino-acid sequence, 313 residues long: Holliday junction branch migration complex subunit RuvB (313 aa).

A large ATPase domain (RuvB-L) region spans residues Met1 to Tyr157. Residues Gly38, Lys41, Thr42, Thr43, Glu104 to Phe106, Arg147, Tyr157, and Arg194 each bind ATP. Residue Thr42 participates in Mg(2+) binding. Residues Ser158–Gly228 are small ATPAse domain (RuvB-S). Residues Lys231–Glu313 form a head domain (RuvB-H) region. Arg286 and Arg291 together coordinate DNA.

Belongs to the RuvB family. In terms of assembly, homohexamer. Forms an RuvA(8)-RuvB(12)-Holliday junction (HJ) complex. HJ DNA is sandwiched between 2 RuvA tetramers; dsDNA enters through RuvA and exits via RuvB. An RuvB hexamer assembles on each DNA strand where it exits the tetramer. Each RuvB hexamer is contacted by two RuvA subunits (via domain III) on 2 adjacent RuvB subunits; this complex drives branch migration. In the full resolvosome a probable DNA-RuvA(4)-RuvB(12)-RuvC(2) complex forms which resolves the HJ.

It is found in the cytoplasm. It carries out the reaction ATP + H2O = ADP + phosphate + H(+). The RuvA-RuvB-RuvC complex processes Holliday junction (HJ) DNA during genetic recombination and DNA repair, while the RuvA-RuvB complex plays an important role in the rescue of blocked DNA replication forks via replication fork reversal (RFR). RuvA specifically binds to HJ cruciform DNA, conferring on it an open structure. The RuvB hexamer acts as an ATP-dependent pump, pulling dsDNA into and through the RuvAB complex. RuvB forms 2 homohexamers on either side of HJ DNA bound by 1 or 2 RuvA tetramers; 4 subunits per hexamer contact DNA at a time. Coordinated motions by a converter formed by DNA-disengaged RuvB subunits stimulates ATP hydrolysis and nucleotide exchange. Immobilization of the converter enables RuvB to convert the ATP-contained energy into a lever motion, pulling 2 nucleotides of DNA out of the RuvA tetramer per ATP hydrolyzed, thus driving DNA branch migration. The RuvB motors rotate together with the DNA substrate, which together with the progressing nucleotide cycle form the mechanistic basis for DNA recombination by continuous HJ branch migration. Branch migration allows RuvC to scan DNA until it finds its consensus sequence, where it cleaves and resolves cruciform DNA. The chain is Holliday junction branch migration complex subunit RuvB from Thermosipho melanesiensis (strain DSM 12029 / CIP 104789 / BI429).